A 102-amino-acid chain; its full sequence is Nuclear protein 2 (102 aa).

Disordered regions lie at residues Met1–Thr26 and Pro46–Ala102. Over residues Gln85–Ala102 the composition is skewed to basic residues.

Belongs to the NUPR family.

It localises to the nucleus. Functionally, acts as a transcriptional repressor by inhibiting gene expression at the NUPR1 promoter in a p53/TP53-dependent manner in cancer cells. Involved in the G1 cell cycle arrest, and in a decrease in cell viability and cell proliferation of pancreatic cancer cells. Plays a role as a negative regulator of the protumoral factor NUPR1. The chain is Nuclear protein 2 from Mus musculus (Mouse).